The following is a 211-amino-acid chain: Riboflavin kinase (211 aa).

Residues Met1–Ser81 form an H-T-H motif-like region. Positions Ile82–Glu211 are riboflavin kinase. Residue Gly91–Ala96 coordinates CDP. Residues Thr120 and Asn122 each coordinate Mg(2+). Positions 177 and 185 each coordinate FMN. Position 190 to 193 (Phe190 to Arg193) interacts with CDP.

The protein belongs to the archaeal riboflavin kinase family. Requires Mg(2+) as cofactor.

It carries out the reaction riboflavin + CTP = CDP + FMN + H(+). Its pathway is cofactor biosynthesis; FMN biosynthesis; FMN from riboflavin (CTP route): step 1/1. Its function is as follows. Catalyzes the CTP-dependent phosphorylation of riboflavin (vitamin B2) to form flavin mononucleotide (FMN). This Pyrobaculum islandicum (strain DSM 4184 / JCM 9189 / GEO3) protein is Riboflavin kinase (ribK).